Consider the following 371-residue polypeptide: Cytochrome b (371 aa).

The next 4 membrane-spanning stretches (helical) occupy residues 25–45 (FGSM…FLAI), 69–90 (WTMQ…YTHI), 105–125 (WLSG…GYVL), and 170–190 (FFAL…VHII). Heme b-binding residues include His75 and His89. The heme b site is built by His174 and His188. His193 lines the a ubiquinone pocket. 4 helical membrane passes run 218–238 (YKDM…MSFS), 280–300 (LGGT…PFTH), 312–332 (FTQL…WTAT), and 339–358 (FILI…IINP).

The protein belongs to the cytochrome b family. In terms of assembly, the cytochrome bc1 complex contains 3 respiratory subunits (MT-CYB, CYC1 and UQCRFS1), 2 core proteins (UQCRC1 and UQCRC2) and probably 6 low-molecular weight proteins. Heme b serves as cofactor.

The protein resides in the mitochondrion inner membrane. Functionally, component of the ubiquinol-cytochrome c reductase complex (complex III or cytochrome b-c1 complex) that is part of the mitochondrial respiratory chain. The b-c1 complex mediates electron transfer from ubiquinol to cytochrome c. Contributes to the generation of a proton gradient across the mitochondrial membrane that is then used for ATP synthesis. The chain is Cytochrome b (MT-CYB) from Elapognathus coronatus (Western crowned snake).